The chain runs to 161 residues: SsrA-binding protein (161 aa).

This sequence belongs to the SmpB family.

The protein localises to the cytoplasm. Required for rescue of stalled ribosomes mediated by trans-translation. Binds to transfer-messenger RNA (tmRNA), required for stable association of tmRNA with ribosomes. tmRNA and SmpB together mimic tRNA shape, replacing the anticodon stem-loop with SmpB. tmRNA is encoded by the ssrA gene; the 2 termini fold to resemble tRNA(Ala) and it encodes a 'tag peptide', a short internal open reading frame. During trans-translation Ala-aminoacylated tmRNA acts like a tRNA, entering the A-site of stalled ribosomes, displacing the stalled mRNA. The ribosome then switches to translate the ORF on the tmRNA; the nascent peptide is terminated with the 'tag peptide' encoded by the tmRNA and targeted for degradation. The ribosome is freed to recommence translation, which seems to be the essential function of trans-translation. The polypeptide is SsrA-binding protein (Desulforamulus reducens (strain ATCC BAA-1160 / DSM 100696 / MI-1) (Desulfotomaculum reducens)).